A 185-amino-acid polypeptide reads, in one-letter code: NADH-ubiquinone oxidoreductase chain 6 (185 aa).

Transmembrane regions (helical) follow at residues 3–23, 28–48, 54–74, 87–107, and 134–154; these read SLFM…ISTP, SVFW…SLGL, IFII…IMLI, HFLP…TNSP, and ELVL…ILLA.

Belongs to the complex I subunit 6 family.

Its subcellular location is the mitochondrion membrane. It catalyses the reaction a ubiquinone + NADH + 5 H(+)(in) = a ubiquinol + NAD(+) + 4 H(+)(out). Functionally, core subunit of the mitochondrial membrane respiratory chain NADH dehydrogenase (Complex I) that is believed to belong to the minimal assembly required for catalysis. Complex I functions in the transfer of electrons from NADH to the respiratory chain. The immediate electron acceptor for the enzyme is believed to be ubiquinone. The chain is NADH-ubiquinone oxidoreductase chain 6 (ND6) from Sarcophyton glaucum (Toadstool umbrella leather coral).